The sequence spans 189 residues: uncharacterized protein (189 aa).

5 helical membrane-spanning segments follow: residues 4–21, 34–56, 79–101, 122–144, and 148–170; these read AISTVLYVLIPFLVFLFR, AFYPFHLFLPMIVVFITGIPLIL, LLVIDTMLFQIMLLQPFITLIYS, RILSSLFAFVIAGIALPEIVLLN, and ILHVDYLFFVHLIASSVFANLLV.

Its subcellular location is the cell membrane. This is an uncharacterized protein from Archaeoglobus fulgidus (strain ATCC 49558 / DSM 4304 / JCM 9628 / NBRC 100126 / VC-16).